Consider the following 182-residue polypeptide: Alkyl hydroperoxide reductase AhpD (182 aa).

Cys132 acts as the Proton donor in catalysis. An intrachain disulfide couples Cys132 to Cys135. Cys135 (cysteine sulfenic acid (-SOH) intermediate) is an active-site residue.

Belongs to the AhpD family.

It catalyses the reaction N(6)-[(R)-dihydrolipoyl]-L-lysyl-[lipoyl-carrier protein] + a hydroperoxide = N(6)-[(R)-lipoyl]-L-lysyl-[lipoyl-carrier protein] + an alcohol + H2O. Functionally, antioxidant protein with alkyl hydroperoxidase activity. Required for the reduction of the AhpC active site cysteine residues and for the regeneration of the AhpC enzyme activity. This Bradyrhizobium diazoefficiens (strain JCM 10833 / BCRC 13528 / IAM 13628 / NBRC 14792 / USDA 110) protein is Alkyl hydroperoxide reductase AhpD.